A 168-amino-acid chain; its full sequence is Small ribosomal subunit protein uS9 (168 aa).

Residues 1 to 15 (MAQNEETTEAVEAEE) show a composition bias toward acidic residues. The segment at 1 to 34 (MAQNEETTEAVEAEETLTSYTSESGAAEAAAPKK) is disordered.

The protein belongs to the universal ribosomal protein uS9 family.

This is Small ribosomal subunit protein uS9 from Arthrobacter sp. (strain FB24).